Consider the following 471-residue polypeptide: Eukaryotic translation initiation factor 3 subunit M (471 aa).

A disordered region spans residues Glu39–Gln61. Positions Asp206–Tyr377 constitute a PCI domain. A disordered region spans residues Gln419–Glu471. The span at Ser430–Arg442 shows a compositional bias: basic and acidic residues. Low complexity predominate over residues Gln445–Pro461.

Belongs to the eIF-3 subunit M family. Component of the eukaryotic translation initiation factor 3 (eIF-3) complex.

The protein resides in the cytoplasm. Functionally, component of the eukaryotic translation initiation factor 3 (eIF-3) complex, which is involved in protein synthesis of a specialized repertoire of mRNAs and, together with other initiation factors, stimulates binding of mRNA and methionyl-tRNAi to the 40S ribosome. The eIF-3 complex specifically targets and initiates translation of a subset of mRNAs involved in cell proliferation. The polypeptide is Eukaryotic translation initiation factor 3 subunit M (Aspergillus clavatus (strain ATCC 1007 / CBS 513.65 / DSM 816 / NCTC 3887 / NRRL 1 / QM 1276 / 107)).